Reading from the N-terminus, the 147-residue chain is Cytochrome c-type biogenesis protein CcmE (147 aa).

The Cytoplasmic segment spans residues 1 to 7; it reads MTRKQKR. A helical; Signal-anchor for type II membrane protein transmembrane segment spans residues 8–28; the sequence is LSVIVGGLAFLGAATGLTFYA. Over 29 to 147 the chain is Periplasmic; sequence LGQKASYFYM…KGVWQESKSE (119 aa). The heme site is built by H122 and Y126.

The protein belongs to the CcmE/CycJ family.

Its subcellular location is the cell inner membrane. Its function is as follows. Heme chaperone required for the biogenesis of c-type cytochromes. Transiently binds heme delivered by CcmC and transfers the heme to apo-cytochromes in a process facilitated by CcmF and CcmH. This chain is Cytochrome c-type biogenesis protein CcmE, found in Mesorhizobium japonicum (strain LMG 29417 / CECT 9101 / MAFF 303099) (Mesorhizobium loti (strain MAFF 303099)).